A 516-amino-acid chain; its full sequence is MNLISKKNELKQGFYPLFFLEEFYIRVLIHMNHNHILKIGNIKQSKLIHVNRICHYLLIKRLIRQIRKQSHKYNGISEFPNYETEFYFQYKNRFYNLMIENVFLLILQMIWQHQKTRKNDPCILIHRSIQSTFPFLENKIIHCIWIIHGNIQLFHTIQQLNFLFLLLYERIRDKSFLHLLKNIFNLKKELLIEAFYCDKFHLIELSMFFRNLYINEFDSFIVYHIVKTWKLAYLLNPSQAIDDSSFIQKNHILLNIKRKQKSLPLVSWLANRSFYSLYGNIHYVRRDLSFLMAIQAGKHISRFWKYNSINFLQLKLGFPCSLDVLYLKSLFNQDFLFLGYRIVNKLWKKNFKIRAVSWYSPILFFFKGRRISTKMPVLNLIHRLSVMHLCNLEGYPIHKAAWSVFNDKQIMNIFSNLLRNIILYYSGCSNRSDLGKIQYILEFSCMKTLAFKHKSSIRSTWTQYKKHVSLLSLVKNRHKNGKTSVDLYFLFQKTNKLWLLDLSKIQDSLACFIFID.

The protein belongs to the intron maturase 2 family. MatK subfamily.

It localises to the plastid. It is found in the chloroplast. In terms of biological role, usually encoded in the trnK tRNA gene intron. Probably assists in splicing its own and other chloroplast group II introns. The sequence is that of Maturase K from Chara globularis (Fragile stonewort).